Reading from the N-terminus, the 347-residue chain is Lipoyl synthase (347 aa).

7 residues coordinate [4Fe-4S] cluster: cysteine 55, cysteine 60, cysteine 66, cysteine 81, cysteine 85, cysteine 88, and serine 292. Residues 67 to 281 enclose the Radical SAM core domain; the sequence is WEDREATFLI…RDYGHDIGFA (215 aa).

This sequence belongs to the radical SAM superfamily. Lipoyl synthase family. It depends on [4Fe-4S] cluster as a cofactor.

The protein localises to the cytoplasm. It carries out the reaction [[Fe-S] cluster scaffold protein carrying a second [4Fe-4S](2+) cluster] + N(6)-octanoyl-L-lysyl-[protein] + 2 oxidized [2Fe-2S]-[ferredoxin] + 2 S-adenosyl-L-methionine + 4 H(+) = [[Fe-S] cluster scaffold protein] + N(6)-[(R)-dihydrolipoyl]-L-lysyl-[protein] + 4 Fe(3+) + 2 hydrogen sulfide + 2 5'-deoxyadenosine + 2 L-methionine + 2 reduced [2Fe-2S]-[ferredoxin]. The protein operates within protein modification; protein lipoylation via endogenous pathway; protein N(6)-(lipoyl)lysine from octanoyl-[acyl-carrier-protein]: step 2/2. Catalyzes the radical-mediated insertion of two sulfur atoms into the C-6 and C-8 positions of the octanoyl moiety bound to the lipoyl domains of lipoate-dependent enzymes, thereby converting the octanoylated domains into lipoylated derivatives. The protein is Lipoyl synthase of Corynebacterium kroppenstedtii (strain DSM 44385 / JCM 11950 / CIP 105744 / CCUG 35717).